We begin with the raw amino-acid sequence, 125 residues long: Ribonuclease P protein component 1 (125 aa).

The span at 1 to 13 shows a compositional bias: basic and acidic residues; sequence MRRNGKEGKDRAP. The tract at residues 1–24 is disordered; that stretch reads MRRNGKEGKDRAPGRPQRKGQEVA.

The protein belongs to the eukaryotic/archaeal RNase P protein component 1 family. In terms of assembly, consists of a catalytic RNA component and at least 4-5 protein subunits.

The protein resides in the cytoplasm. It catalyses the reaction Endonucleolytic cleavage of RNA, removing 5'-extranucleotides from tRNA precursor.. In terms of biological role, part of ribonuclease P, a protein complex that generates mature tRNA molecules by cleaving their 5'-ends. This chain is Ribonuclease P protein component 1, found in Thermococcus onnurineus (strain NA1).